The primary structure comprises 238 residues: Valine-rich protein (238 aa).

Residues 1 to 16 form the signal peptide; sequence MQAVLLVVALFGAALA.

In terms of tissue distribution, prismatic layer of shell (at protein level). Expressed primarily in the mantle with highest level in the mantle edge and lower level in the mantle pallium.

It is found in the secreted. The chain is Valine-rich protein from Margaritifera margaritifera (Freshwater pearl mussel).